The primary structure comprises 335 residues: Homeobox protein unc-39 (335 aa).

2 disordered regions span residues 27–56 (FTSSSNSNTSNSSTSPSHISDQFSSSGGPP) and 269–294 (RRQRDKSNNSAKCSPPSSSSSTNGGS). The span at 28-41 (TSSSNSNTSNSSTS) shows a compositional bias: low complexity. Positions 42-53 (PSHISDQFSSSG) are enriched in polar residues. A DNA-binding region (homeobox) is located at residues 225-277 (KDSSRKFLKQFFRNVSEYPTQEQKREISRATGLKIVQISNWFKNRRQRDKSNN). The segment covering 276-294 (NNSAKCSPPSSSSSTNGGS) has biased composition (low complexity).

Belongs to the SIX/Sine oculis homeobox family.

It is found in the nucleus. Probable transcription factor required for differentiation and migration of neuronal cells, such as RID and CAN neurons. Specifically, plays a role in the terminal differentiation of RID peptidergic neurons. Also required for CAN neuron axon guidance. The protein is Homeobox protein unc-39 of Caenorhabditis elegans.